Here is a 234-residue protein sequence, read N- to C-terminus: Glycoprotein BDLF3 (234 aa).

The signal sequence occupies residues 1–28; that stretch reads MAHARDKAGAVMAMILICETSLIWTSSG. Positions 29–62 are disordered; the sequence is SSTASAGNVTGTTAVTTPSPSASGPSTNQSTTLT. Asn36, Asn56, Asn77, Asn96, Asn101, Asn110, Asn127, Asn144, and Asn159 each carry an N-linked (GlcNAc...) asparagine; by host glycan. The segment at 116–138 is disordered; the sequence is AGTGTSTGVTSNVTTRSSSTTSA. Residues 187–207 traverse the membrane as a helical segment; it reads LVFVGLTFLMLILIFAAGLMM.

The protein belongs to the Epstein-Barr virus BDLF3 protein family.

The protein resides in the membrane. The protein is Glycoprotein BDLF3 of Homo sapiens (Human).